The primary structure comprises 143 residues: Large ribosomal subunit protein uL13c (143 aa).

Belongs to the universal ribosomal protein uL13 family. In terms of assembly, part of the 50S ribosomal subunit.

The protein resides in the plastid. The protein localises to the chloroplast. This Guillardia theta (Cryptophyte) protein is Large ribosomal subunit protein uL13c.